Consider the following 159-residue polypeptide: Phosphopantetheine adenylyltransferase (159 aa).

Serine 10 provides a ligand contact to substrate. ATP is bound by residues 10-11 (SF) and histidine 18. The substrate site is built by lysine 42, leucine 77, and lysine 91. ATP contacts are provided by residues 92 to 94 (GIR), glutamate 102, and 126 to 132 (NAHVSSS).

This sequence belongs to the bacterial CoaD family. Homohexamer. Mg(2+) is required as a cofactor.

The protein localises to the cytoplasm. The catalysed reaction is (R)-4'-phosphopantetheine + ATP + H(+) = 3'-dephospho-CoA + diphosphate. Its pathway is cofactor biosynthesis; coenzyme A biosynthesis; CoA from (R)-pantothenate: step 4/5. In terms of biological role, reversibly transfers an adenylyl group from ATP to 4'-phosphopantetheine, yielding dephospho-CoA (dPCoA) and pyrophosphate. This chain is Phosphopantetheine adenylyltransferase, found in Leifsonia xyli subsp. xyli (strain CTCB07).